The chain runs to 305 residues: Suppressor of activated egl-4 protein 2 (305 aa).

Residues 138–168 (KRGYESDSSDVSGVSHCSDAKRRRGRPRKDE) are disordered. A DNA-binding region (a.T hook) is located at residues 158 to 170 (KRRRGRPRKDEEA).

Interacts with phosphorylated egl-4. May interact with itself. May be a component of a histone deacetylase complex containing saeg-2, saeg-1 and hda-2. As to expression, ubiquitously expressed.

The protein localises to the nucleus. As a likely component of a histone deacetylase complex, together with saeg-1 and hda-2, functions downstream of the cAMP-dependent kinase egl-4 to regulate the expression of genes required for egg-laying and foraging. The protein is Suppressor of activated egl-4 protein 2 of Caenorhabditis elegans.